The following is a 202-amino-acid chain: MARYRGPRLRIVRRLGELAGLTRKVPKRSYPPGQHGQARKKRSEYALRLEEKQKLRFNYGVSERQLVRYVRKARRVSGSTGQTLLQLLEMRLDNTVFRLGMAPTIPAARQLVNHGHILVNGRNVSIPSYQCRPGDVITVRDNERSRRLVETNLQNPGLANLPSHLELDKSTLTGRVTGIVERQWVALEVNELLVVEYYSRKV.

Residues 90-152 (MRLDNTVFRL…ERSRRLVETN (63 aa)) enclose the S4 RNA-binding domain.

It belongs to the universal ribosomal protein uS4 family. In terms of assembly, part of the 30S ribosomal subunit. Contacts protein S5. The interaction surface between S4 and S5 is involved in control of translational fidelity.

Functionally, one of the primary rRNA binding proteins, it binds directly to 16S rRNA where it nucleates assembly of the body of the 30S subunit. With S5 and S12 plays an important role in translational accuracy. The protein is Small ribosomal subunit protein uS4 of Thermosynechococcus vestitus (strain NIES-2133 / IAM M-273 / BP-1).